A 533-amino-acid polypeptide reads, in one-letter code: Invertase (533 aa).

Residues 1-22 (MVQVLSVLVIPLLTLFFGYVAS) form the signal peptide. Substrate is bound by residues 47–50 (WMND) and Q68. Residue D50 is part of the active site. N-linked (GlcNAc...) asparagine glycosylation is present at N72. Position 110-111 (110-111 (FS)) interacts with substrate. 3 N-linked (GlcNAc...) asparagine glycosylation sites follow: N119, N120, and N126. Position 178 to 179 (178 to 179 (RD)) interacts with substrate. N-linked (GlcNAc...) asparagine glycosylation occurs at N219. Residue W314 coordinates substrate. Residues N334, N392, and N419 are each glycosylated (N-linked (GlcNAc...) asparagine).

It belongs to the glycosyl hydrolase 32 family.

It catalyses the reaction Hydrolysis of terminal non-reducing beta-D-fructofuranoside residues in beta-D-fructofuranosides.. The polypeptide is Invertase (INV) (Schwanniomyces occidentalis (Yeast)).